A 377-amino-acid polypeptide reads, in one-letter code: Ferric enterobactin transport protein FepE (377 aa).

The Cytoplasmic portion of the chain corresponds to 1-41 (MSSLNIKQGSDAHFPDYPLASPSNNEIDLLNLISVLWRAKK). The helical transmembrane segment at 42-62 (TVMAVVFAFACAGLLISFILP) threads the bilayer. Residues 63–338 (QKWTSAAVVT…LPVKKDGPGK (276 aa)) lie on the Periplasmic side of the membrane. The chain crosses the membrane as a helical span at residues 339–359 (AIIVILSALIGGMVACGGVLL). At 360 to 377 (RYAMASRKQDAMMADHLV) the chain is on the cytoplasmic side.

It belongs to the WzzB/Cld/Rol family.

It localises to the cell inner membrane. Its function is as follows. Part of the ferric enterobactin transport system. The protein is Ferric enterobactin transport protein FepE (fepE) of Escherichia coli (strain K12).